A 1117-amino-acid polypeptide reads, in one-letter code: Mitochondrial protein cyt-4 (1117 aa).

In terms of domain architecture, RNB spans 561–916 (RQDFYTSTVY…LVHWQIQAAL (356 aa)). The tract at residues 705–730 (VVLEVGTPPSAEDEAPTRKMTKPDEL) is disordered. Basic and acidic residues predominate over residues 719–730 (APTRKMTKPDEL).

It belongs to the RNR ribonuclease family. As to quaternary structure, homodimer.

Its subcellular location is the mitochondrion. In terms of biological role, required for RNA 5'- and 3'-end processing and splicing. May act on the RNA processing enzymes directly, or it may act on other regulatory molecules, which influence the activity or synthesis of these enzymes. The sequence is that of Mitochondrial protein cyt-4 (cyt-4) from Neurospora crassa (strain ATCC 24698 / 74-OR23-1A / CBS 708.71 / DSM 1257 / FGSC 987).